Here is a 419-residue protein sequence, read N- to C-terminus: Serine--tRNA ligase (419 aa).

226–228 contributes to the L-serine binding site; sequence TSE. Residues 257–259 and Val-273 contribute to the ATP site; that span reads RRE. An L-serine-binding site is contributed by Glu-280. 344–347 serves as a coordination point for ATP; sequence ELTS. Thr-379 provides a ligand contact to L-serine.

The protein belongs to the class-II aminoacyl-tRNA synthetase family. Type-1 seryl-tRNA synthetase subfamily. As to quaternary structure, homodimer. The tRNA molecule binds across the dimer.

The protein localises to the cytoplasm. The enzyme catalyses tRNA(Ser) + L-serine + ATP = L-seryl-tRNA(Ser) + AMP + diphosphate + H(+). It carries out the reaction tRNA(Sec) + L-serine + ATP = L-seryl-tRNA(Sec) + AMP + diphosphate + H(+). It participates in aminoacyl-tRNA biosynthesis; selenocysteinyl-tRNA(Sec) biosynthesis; L-seryl-tRNA(Sec) from L-serine and tRNA(Sec): step 1/1. In terms of biological role, catalyzes the attachment of serine to tRNA(Ser). Is also able to aminoacylate tRNA(Sec) with serine, to form the misacylated tRNA L-seryl-tRNA(Sec), which will be further converted into selenocysteinyl-tRNA(Sec). The chain is Serine--tRNA ligase from Mycolicibacterium vanbaalenii (strain DSM 7251 / JCM 13017 / BCRC 16820 / KCTC 9966 / NRRL B-24157 / PYR-1) (Mycobacterium vanbaalenii).